The chain runs to 233 residues: 3-dehydroquinate dehydratase (233 aa).

3-dehydroquinate contacts are provided by residues 34-36 and arginine 64; that span reads ELR. Histidine 118 acts as the Proton donor/acceptor in catalysis. Catalysis depends on lysine 145, which acts as the Schiff-base intermediate with substrate. Arginine 185, serine 205, and glutamine 209 together coordinate 3-dehydroquinate.

The protein belongs to the type-I 3-dehydroquinase family. In terms of assembly, homodimer.

It catalyses the reaction 3-dehydroquinate = 3-dehydroshikimate + H2O. The protein operates within metabolic intermediate biosynthesis; chorismate biosynthesis; chorismate from D-erythrose 4-phosphate and phosphoenolpyruvate: step 3/7. Involved in the third step of the chorismate pathway, which leads to the biosynthesis of aromatic amino acids. Catalyzes the cis-dehydration of 3-dehydroquinate (DHQ) and introduces the first double bond of the aromatic ring to yield 3-dehydroshikimate. This Coxiella burnetii (strain CbuG_Q212) (Coxiella burnetii (strain Q212)) protein is 3-dehydroquinate dehydratase.